The primary structure comprises 408 residues: MKKSGSGKRGPPDGNHQSAAPEKVGWVRKFCGKGIFREIWKNRYVVLKGDQLYVSEKEVKDEKNSQEVFDLSDYEKCEELRKSKSRSKKNHSKFTLARCRQPGTTAPNLIFLAVSPEEKESWINALSSAITRAKNRILDEVTVEEDSYLAHPTRDRAKIQHSRRPPTRGHLMAVASTSTSDGMLTLDLIQEEDPSPEEPASCAESFRVDLDKSVAQLAGSRRRADSDRIQPSSQRASSLSRPWEKPDKGAPYTPQALKKFPSTEKSRCASLEEILSQRDTAPARPLHLQAEESLPPVPAQPGQLSRIQDLVARKLEKTQELLAEVQGLGDGKRKAKDPPQSPPDSESEQLLLETERLLGEASSNWSQAKRVLQEVRELRDLYRQMDLQTPDSHLRQTSQHSQYRKSLM.

The interval Met-1–Pro-21 is disordered. Residues Ala-20–Thr-131 form the PH domain. An interaction with capping proteins (CPs) region spans residues Arg-132–Glu-192. Residues Asn-135–Ile-307 form an interaction with ATM, CKIP, IFP35 and NMI region. The disordered stretch occupies residues Leu-217–Glu-264. A Phosphoserine modification is found at Ser-226. Over residues Ile-229–Ser-240 the composition is skewed to polar residues. Phosphoserine is present on residues Ser-270 and Ser-341. Positions Ile-307–Met-408 are negative regulator of AP-1 activity. Disordered regions lie at residues Val-325–Glu-348 and Thr-389–Met-408. Residues Thr-389–Ser-401 show a composition bias toward polar residues.

Heterodimer or homodimer. Interacts with CK2 and actin capping subunits (capping protein CP-alpha and CP-beta). CKIP1 and CK2 together inhibit the activity of actin capping protein at the barbed ends of actin filaments. Interacts with ATM, IFP35, JUN, JUND, NMI and PI3K. Interacts with AKT1, AKT2 and AKT3 (each isozyme of PKB), PtdIns(3,5)P2, PtdIns(4,5)P2 and PtdIns(3,4,5)P2. In terms of processing, C-terminal fragments could be released during apoptosis via caspase-3-dependent cleavage.

Its subcellular location is the cell membrane. The protein resides in the nucleus. It localises to the cytoplasm. Its function is as follows. Plays a role in the regulation of the actin cytoskeleton through its interactions with actin capping protein (CP). May function to target CK2 to the plasma membrane thereby serving as an adapter to facilitate the phosphorylation of CP by protein kinase 2 (CK2). Appears to target ATM to the plasma membrane. Appears to also inhibit tumor cell growth by inhibiting AKT-mediated cell-survival. Also implicated in PI3K-regulated muscle differentiation, the regulation of AP-1 activity (plasma membrane bound AP-1 regulator that translocates to the nucleus) and the promotion of apoptosis induced by tumor necrosis factor TNF. When bound to PKB, it inhibits it probably by decreasing PKB level of phosphorylation. The chain is Pleckstrin homology domain-containing family O member 1 (Plekho1) from Mus musculus (Mouse).